The sequence spans 318 residues: tRNA pseudouridine synthase B (318 aa).

Aspartate 47 acts as the Nucleophile in catalysis.

Belongs to the pseudouridine synthase TruB family. Type 1 subfamily.

The enzyme catalyses uridine(55) in tRNA = pseudouridine(55) in tRNA. Its function is as follows. Responsible for synthesis of pseudouridine from uracil-55 in the psi GC loop of transfer RNAs. The protein is tRNA pseudouridine synthase B of Shewanella putrefaciens (strain CN-32 / ATCC BAA-453).